Here is a 369-residue protein sequence, read N- to C-terminus: Phosphate acyltransferase (369 aa).

Positions 342 to 369 (ASRAPNSQTAGGERAAAVPQSAQLRMDS) are disordered.

This sequence belongs to the PlsX family. In terms of assembly, homodimer. Probably interacts with PlsY.

The protein localises to the cytoplasm. The enzyme catalyses a fatty acyl-[ACP] + phosphate = an acyl phosphate + holo-[ACP]. It participates in lipid metabolism; phospholipid metabolism. Its function is as follows. Catalyzes the reversible formation of acyl-phosphate (acyl-PO(4)) from acyl-[acyl-carrier-protein] (acyl-ACP). This enzyme utilizes acyl-ACP as fatty acyl donor, but not acyl-CoA. This Methylocella silvestris (strain DSM 15510 / CIP 108128 / LMG 27833 / NCIMB 13906 / BL2) protein is Phosphate acyltransferase.